The sequence spans 133 residues: UPF0292 protein TGAM_1777 (133 aa).

The Toprim domain occupies 20-100 (EGALIVEGLR…RVDVETRREL (81 aa)). 3 residues coordinate Mg(2+): Glu26, Asp69, and Asp71.

Belongs to the UPF0292 family. Requires Mg(2+) as cofactor.

This chain is UPF0292 protein TGAM_1777, found in Thermococcus gammatolerans (strain DSM 15229 / JCM 11827 / EJ3).